A 406-amino-acid polypeptide reads, in one-letter code: Succinylornithine transaminase (406 aa).

N6-(pyridoxal phosphate)lysine is present on Lys252.

This sequence belongs to the class-III pyridoxal-phosphate-dependent aminotransferase family. AstC subfamily. Pyridoxal 5'-phosphate is required as a cofactor.

The catalysed reaction is N(2)-succinyl-L-ornithine + 2-oxoglutarate = N-succinyl-L-glutamate 5-semialdehyde + L-glutamate. It participates in amino-acid degradation; L-arginine degradation via AST pathway; L-glutamate and succinate from L-arginine: step 3/5. Catalyzes the transamination of N(2)-succinylornithine and alpha-ketoglutarate into N(2)-succinylglutamate semialdehyde and glutamate. Can also act as an acetylornithine aminotransferase. In Escherichia coli O157:H7, this protein is Succinylornithine transaminase.